The following is a 339-amino-acid chain: Anthranilate phosphoribosyltransferase (339 aa).

5-phospho-alpha-D-ribose 1-diphosphate-binding positions include glycine 82, 85-86 (GD), 92-95 (NIST), 110-118 (KHGNRGISS), and serine 122. Position 82 (glycine 82) interacts with anthranilate. A Mg(2+)-binding site is contributed by serine 94. Asparagine 113 is an anthranilate binding site. An anthranilate-binding site is contributed by arginine 168. Mg(2+) is bound by residues aspartate 227 and glutamate 228.

The protein belongs to the anthranilate phosphoribosyltransferase family. As to quaternary structure, homodimer. Mg(2+) is required as a cofactor.

The catalysed reaction is N-(5-phospho-beta-D-ribosyl)anthranilate + diphosphate = 5-phospho-alpha-D-ribose 1-diphosphate + anthranilate. It participates in amino-acid biosynthesis; L-tryptophan biosynthesis; L-tryptophan from chorismate: step 2/5. Its function is as follows. Catalyzes the transfer of the phosphoribosyl group of 5-phosphorylribose-1-pyrophosphate (PRPP) to anthranilate to yield N-(5'-phosphoribosyl)-anthranilate (PRA). In Vesicomyosocius okutanii subsp. Calyptogena okutanii (strain HA), this protein is Anthranilate phosphoribosyltransferase.